A 100-amino-acid polypeptide reads, in one-letter code: Co-chaperonin GroES (100 aa).

The protein belongs to the GroES chaperonin family. In terms of assembly, heptamer of 7 subunits arranged in a ring. Interacts with the chaperonin GroEL.

Its subcellular location is the cytoplasm. Functionally, together with the chaperonin GroEL, plays an essential role in assisting protein folding. The GroEL-GroES system forms a nano-cage that allows encapsulation of the non-native substrate proteins and provides a physical environment optimized to promote and accelerate protein folding. GroES binds to the apical surface of the GroEL ring, thereby capping the opening of the GroEL channel. The chain is Co-chaperonin GroES from Mycolicibacterium smegmatis (strain ATCC 700084 / mc(2)155) (Mycobacterium smegmatis).